The primary structure comprises 501 residues: MKYILSIDQGTTSSRAIVFDKNANIKGIAQKEFTQIYPQPSWVEHDPTEIWGSQLGVITEALANSRILPNEVDAIGITNQRETTVIWEKNTGKPIYNAIVWQDRRTAKICDQLTKEGKDKIILEKTGLVLDSYFSGTKILWILDNVEGARQKAENGELCFGTIDTWLLWNLTQKKVHATDYSNASRTLLLNIKTLEWDDELLNILNIPKAILPELKESSTIYGKTDKSLFGAEIPIAGIAGDQFAATFGQACLKKGMAKNTYGTGCFLTVNIGKEPIINHERLLTSIAWGRKKSVTYVLEGSVFIGGAVIQWLRDGLEFFRKSSDAESLASSASDNGGVYFVPAFVGLGAPHWDSYARGTIIGITRGSTKAHITRAALESIAFQSFDILNTMKKSIPNFEIKELRVDGGASQNNLLMQFQADLLECKVVRPKITETTALGAAYLAGLASGYWQSAEEIVSLWQVDKIFEPSMPKNQKEKLLENWNRAIERSKSWIQNSHSL.

Position 11 (Thr-11) interacts with ADP. ATP is bound by residues Thr-11, Thr-12, and Ser-13. Residue Thr-11 coordinates sn-glycerol 3-phosphate. Residue Arg-15 coordinates ADP. Sn-glycerol 3-phosphate contacts are provided by Arg-81, Glu-82, Tyr-133, and Asp-242. Glycerol contacts are provided by Arg-81, Glu-82, Tyr-133, Asp-242, and Gln-243. Positions 264 and 307 each coordinate ADP. The ATP site is built by Thr-264, Gly-307, Gln-311, and Gly-409. ADP is bound by residues Gly-409 and Asn-413.

The protein belongs to the FGGY kinase family.

The enzyme catalyses glycerol + ATP = sn-glycerol 3-phosphate + ADP + H(+). It functions in the pathway polyol metabolism; glycerol degradation via glycerol kinase pathway; sn-glycerol 3-phosphate from glycerol: step 1/1. Its activity is regulated as follows. Inhibited by fructose 1,6-bisphosphate (FBP). In terms of biological role, key enzyme in the regulation of glycerol uptake and metabolism. Catalyzes the phosphorylation of glycerol to yield sn-glycerol 3-phosphate. The polypeptide is Glycerol kinase (Borreliella afzelii (strain PKo) (Borrelia afzelii)).